We begin with the raw amino-acid sequence, 428 residues long: 3-phosphoshikimate 1-carboxyvinyltransferase (428 aa).

Residues Lys20, Ser21, and Arg25 each contribute to the 3-phosphoshikimate site. A phosphoenolpyruvate-binding site is contributed by Lys20. Phosphoenolpyruvate is bound by residues Gly92 and Arg120. 3-phosphoshikimate contacts are provided by Ser166, Gln168, Asp314, and Lys341. Gln168 contacts phosphoenolpyruvate. The Proton acceptor role is filled by Asp314. Phosphoenolpyruvate-binding residues include Arg345 and Arg387.

It belongs to the EPSP synthase family. In terms of assembly, monomer.

The protein resides in the cytoplasm. It carries out the reaction 3-phosphoshikimate + phosphoenolpyruvate = 5-O-(1-carboxyvinyl)-3-phosphoshikimate + phosphate. It participates in metabolic intermediate biosynthesis; chorismate biosynthesis; chorismate from D-erythrose 4-phosphate and phosphoenolpyruvate: step 6/7. In terms of biological role, catalyzes the transfer of the enolpyruvyl moiety of phosphoenolpyruvate (PEP) to the 5-hydroxyl of shikimate-3-phosphate (S3P) to produce enolpyruvyl shikimate-3-phosphate and inorganic phosphate. In Listeria monocytogenes serovar 1/2a (strain ATCC BAA-679 / EGD-e), this protein is 3-phosphoshikimate 1-carboxyvinyltransferase.